The primary structure comprises 378 residues: Stimulator of interferon genes protein (378 aa).

2 consecutive transmembrane segments (helical) span residues 21–41 (AAFVLLSTCLAALWELGEPAD) and 46–66 (WLVLHLASEQLGLLFKGLCSL). 2 S-palmitoyl cysteine lipidation sites follow: cysteine 88 and cysteine 91. Helical transmembrane passes span 89-109 (LGCPIRCGVLLLLSCYCYTFL) and 114-134 (GLPFAWIVALLGLSQALNILL). A cyclic dinucleotide-binding domain (CBD) region spans residues 153–339 (FNVAHGLAWS…KHLKQEEKEE (187 aa)). 4 residues coordinate 2',3'-cGAMP: serine 162, tyrosine 167, arginine 238, and threonine 263. Residues serine 162, tyrosine 167, 238–241 (RVYT), and threonine 263 each bind 3',3'-c-di-GMP. 2',3'-cUAMP is bound by residues tyrosine 167, arginine 238, and threonine 263. Residues 339-378 (EVTVGTMGSSGVLESSTLDKEPQLLISGMDQPLPLRTDVF) form a C-terminal tail (CTT) region. At serine 354 the chain carries Phosphoserine. Threonine 355 carries the post-translational modification Phosphothreonine. Residues 362 to 365 (LLIS) carry the pLxIS motif motif. Residue serine 365 is modified to Phosphoserine; by TBK1.

It belongs to the STING family. In terms of assembly, homodimer; forms a homodimer in absence of cyclic nucleotide (c-di-GMP or cGAMP). Homotetramer; in presence of cyclic nucleotide (c-di-GMP or cGAMP), forms tetramers and higher-order oligomers through side-by-side packing. Interacts (when phosphorylated) with IRF3; following activation and phosphorylation on the pLxIS motif by TBK1, recruits IRF3. Interacts with TBK1; when homodimer, leading to subsequent production of IFN-beta. Post-translationally, phosphorylation by TBK1 leads to activation and production of IFN-beta. Following cyclic nucleotide (c-di-GMP or cGAMP)-binding, activation and translocation from the endoplasmic reticulum, STING1 is phosphorylated by TBK1 at Ser-365 in the pLxIS motif. The phosphorylated pLxIS motif constitutes an IRF3-binding motif, leading to recruitment of the transcription factor IRF3 to induce type-I interferons and other cytokines. In contrast, lacks phosphorylation site at position 357, leading to reduced production of type-I interferons and other cytokines.

The protein localises to the endoplasmic reticulum membrane. Its subcellular location is the cytoplasm. It is found in the perinuclear region. The protein resides in the endoplasmic reticulum-Golgi intermediate compartment membrane. It localises to the golgi apparatus membrane. The protein localises to the cytoplasmic vesicle. Its subcellular location is the autophagosome membrane. It is found in the mitochondrion outer membrane. The protein resides in the cell membrane. It catalyses the reaction H(+)(in) = H(+)(out). Its function is as follows. Facilitator of innate immune signaling that acts as a sensor of cytosolic DNA from bacteria and viruses and promotes low production of type I interferon (IFN-alpha and IFN-beta). Compared to other mammals, STING1-dependent type I interferon induction is strongly reduced in bats, suggesting that the cGAS-STING pathway promotes a limited inflammatory response. Innate immune response is triggered in response to non-CpG double-stranded DNA from viruses and bacteria delivered to the cytoplasm. Acts by binding cyclic dinucleotides: recognizes and binds cyclic di-GMP (c-di-GMP), a second messenger produced by bacteria, cyclic UMP-AMP (2',3'-cUAMP), and cyclic GMP-AMP (cGAMP), a messenger produced by CGAS in response to DNA virus in the cytosol. Upon binding to c-di-GMP, cUAMP or cGAMP, STING1 oligomerizes, translocates from the endoplasmic reticulum and is phosphorylated by TBK1 on the pLxIS motif, leading to recruitment and subsequent activation of the transcription factor IRF3 to induce expression of type I interferon and exert a potent anti-viral state. In addition to promote the production of type I interferons, plays a direct role in autophagy. Following cGAMP-binding, STING1 buds from the endoplasmic reticulum into COPII vesicles, which then form the endoplasmic reticulum-Golgi intermediate compartment (ERGIC). The ERGIC serves as the membrane source for WIPI2 recruitment and LC3 lipidation, leading to formation of autophagosomes that target cytosolic DNA or DNA viruses for degradation by the lysosome. Promotes autophagy by acting as a proton channel that directs proton efflux from the Golgi to facilitate MAP1LC3B/LC3B lipidation. The autophagy- and interferon-inducing activities can be uncoupled and autophagy induction is independent of TBK1 phosphorylation. The sequence is that of Stimulator of interferon genes protein from Rhinolophus ferrumequinum (Greater horseshoe bat).